The sequence spans 382 residues: ATP phosphoribosyltransferase regulatory subunit (382 aa).

It belongs to the class-II aminoacyl-tRNA synthetase family. HisZ subfamily. Heteromultimer composed of HisG and HisZ subunits.

It is found in the cytoplasm. It participates in amino-acid biosynthesis; L-histidine biosynthesis; L-histidine from 5-phospho-alpha-D-ribose 1-diphosphate: step 1/9. In terms of biological role, required for the first step of histidine biosynthesis. May allow the feedback regulation of ATP phosphoribosyltransferase activity by histidine. The sequence is that of ATP phosphoribosyltransferase regulatory subunit from Burkholderia cenocepacia (strain HI2424).